The chain runs to 177 residues: Large ribosomal subunit protein uL6 (177 aa).

It belongs to the universal ribosomal protein uL6 family. In terms of assembly, part of the 50S ribosomal subunit.

This protein binds to the 23S rRNA, and is important in its secondary structure. It is located near the subunit interface in the base of the L7/L12 stalk, and near the tRNA binding site of the peptidyltransferase center. In Chelativorans sp. (strain BNC1), this protein is Large ribosomal subunit protein uL6.